A 595-amino-acid polypeptide reads, in one-letter code: MFS-type transporter phomT (595 aa).

Positions 1–11 (MESDGKSDRTK) are enriched in basic and acidic residues. A disordered region spans residues 1-62 (MESDGKSDRT…HVSADDGPVD (62 aa)). Positions 30 to 48 (PGHSTDTEGNGSDNNNTQV) are enriched in polar residues. Asparagine 39 and asparagine 44 each carry an N-linked (GlcNAc...) asparagine glycan. 3 helical membrane passes run 91–111 (IILL…TIVA), 126–146 (DVGW…LFFG), and 156–176 (WVFL…GVAP). Asparagine 177 carries N-linked (GlcNAc...) asparagine glycosylation. Transmembrane regions (helical) follow at residues 186 to 206 (AVAG…IAFS), 217 to 237 (ALIS…GGVF), and 245 to 265 (WCFY…VFFL). N-linked (GlcNAc...) asparagine glycosylation occurs at asparagine 277. 7 helical membrane-spanning segments follow: residues 290–310 (IGTA…QWGG), 320–340 (VVAL…LQFW), 362–382 (VFTG…PIWF), 409–429 (IVGG…YALP), 451–471 (WIGY…QGIV), 483–503 (AIGT…FVSV), and 559–579 (VIWT…AVIF).

This sequence belongs to the major facilitator superfamily. TCR/Tet family.

Its subcellular location is the cell membrane. In terms of biological role, MFS-type transporter; part of the gene cluster that mediates the biosynthesis of the phomopsins, a group of hexapeptide mycotoxins which infects lupins and causes lupinosis disease in livestock. PhomT is likely to be involved in the cellular export of phomopsins. The chain is MFS-type transporter phomT from Diaporthe leptostromiformis (Lupinosis disease fungus).